Consider the following 175-residue polypeptide: Large ribosomal subunit protein uL30 (175 aa).

It belongs to the universal ribosomal protein uL30 family. In terms of assembly, part of the 50S ribosomal subunit.

This chain is Large ribosomal subunit protein uL30, found in Pyrobaculum neutrophilum (strain DSM 2338 / JCM 9278 / NBRC 100436 / V24Sta) (Thermoproteus neutrophilus).